The primary structure comprises 236 residues: 6-carboxyhexanoate--CoA ligase (236 aa).

The protein belongs to the BioW family. As to quaternary structure, homodimer. Requires Mg(2+) as cofactor.

It catalyses the reaction heptanedioate + ATP + CoA = 6-carboxyhexanoyl-CoA + AMP + diphosphate. Its pathway is metabolic intermediate metabolism; pimeloyl-CoA biosynthesis; pimeloyl-CoA from pimelate: step 1/1. In terms of biological role, catalyzes the transformation of pimelate into pimeloyl-CoA with concomitant hydrolysis of ATP to AMP. This chain is 6-carboxyhexanoate--CoA ligase, found in Methanococcus aeolicus (strain ATCC BAA-1280 / DSM 17508 / OCM 812 / Nankai-3).